We begin with the raw amino-acid sequence, 426 residues long: Protein arginine methyltransferase NDUFAF7 homolog, mitochondrial (426 aa).

It belongs to the NDUFAF7 family.

Its subcellular location is the mitochondrion. The enzyme catalyses L-arginyl-[protein] + 2 S-adenosyl-L-methionine = N(omega),N(omega)'-dimethyl-L-arginyl-[protein] + 2 S-adenosyl-L-homocysteine + 2 H(+). In terms of biological role, arginine methyltransferase involved in the assembly or stability of mitochondrial NADH:ubiquinone oxidoreductase complex (complex I). The chain is Protein arginine methyltransferase NDUFAF7 homolog, mitochondrial from Caenorhabditis elegans.